We begin with the raw amino-acid sequence, 336 residues long: Protein SphX (336 aa).

The signal sequence occupies residues 1-27 (MFDLSRLSRGIVPMALLLLGISACTPS).

This sequence belongs to the PstS family.

In terms of biological role, may be involved in the system for phosphate transport across the cytoplasmic membrane. This is Protein SphX (sphX) from Synechocystis sp. (strain ATCC 27184 / PCC 6803 / Kazusa).